A 472-amino-acid chain; its full sequence is 3-isopropylmalate dehydratase large subunit (472 aa).

[4Fe-4S] cluster is bound by residues C353, C414, and C417.

The protein belongs to the aconitase/IPM isomerase family. LeuC type 1 subfamily. As to quaternary structure, heterodimer of LeuC and LeuD. [4Fe-4S] cluster serves as cofactor.

The enzyme catalyses (2R,3S)-3-isopropylmalate = (2S)-2-isopropylmalate. Its pathway is amino-acid biosynthesis; L-leucine biosynthesis; L-leucine from 3-methyl-2-oxobutanoate: step 2/4. In terms of biological role, catalyzes the isomerization between 2-isopropylmalate and 3-isopropylmalate, via the formation of 2-isopropylmaleate. The protein is 3-isopropylmalate dehydratase large subunit of Acinetobacter baumannii (strain AB307-0294).